The primary structure comprises 415 residues: Gamma-glutamyl phosphate reductase (415 aa).

This sequence belongs to the gamma-glutamyl phosphate reductase family.

Its subcellular location is the cytoplasm. It carries out the reaction L-glutamate 5-semialdehyde + phosphate + NADP(+) = L-glutamyl 5-phosphate + NADPH + H(+). Its pathway is amino-acid biosynthesis; L-proline biosynthesis; L-glutamate 5-semialdehyde from L-glutamate: step 2/2. Catalyzes the NADPH-dependent reduction of L-glutamate 5-phosphate into L-glutamate 5-semialdehyde and phosphate. The product spontaneously undergoes cyclization to form 1-pyrroline-5-carboxylate. This chain is Gamma-glutamyl phosphate reductase, found in Leuconostoc citreum (strain KM20).